The primary structure comprises 111 residues: Ribosome-binding factor A (111 aa).

It belongs to the RbfA family. In terms of assembly, monomer. Binds 30S ribosomal subunits, but not 50S ribosomal subunits or 70S ribosomes.

Its subcellular location is the cytoplasm. In terms of biological role, one of several proteins that assist in the late maturation steps of the functional core of the 30S ribosomal subunit. Associates with free 30S ribosomal subunits (but not with 30S subunits that are part of 70S ribosomes or polysomes). Required for efficient processing of 16S rRNA. May interact with the 5'-terminal helix region of 16S rRNA. In Helicobacter pylori (strain J99 / ATCC 700824) (Campylobacter pylori J99), this protein is Ribosome-binding factor A.